We begin with the raw amino-acid sequence, 465 residues long: uncharacterized protein (465 aa).

Disordered stretches follow at residues 1 to 55, 70 to 164, and 221 to 313; these read MNSS…SSHQ, DFSE…VEGQ, and TTDN…KQRV. Residues 40-50 are compositionally biased toward basic and acidic residues; that stretch reads ENYKDNSDHSN. The segment covering 73–82 has biased composition (polar residues); sequence ESFNDNQNLK. The segment covering 83–134 has biased composition (low complexity); it reads NFNTTDNNFNDDYNNDYDSNNDSNNDSNNDSNNDYDNESNNYFNNDSNNDSN. Over residues 141–150 the composition is skewed to basic and acidic residues; sequence ETTKHKLPIE. A compositionally biased stretch (low complexity) spans 221 to 235; sequence TTDNQSNTESSQENN. 2 stretches are compositionally biased toward basic and acidic residues: residues 236 to 249 and 259 to 275; these read VIKK…DKQP and IVPK…KSIK. Over residues 288-306 the composition is skewed to polar residues; that stretch reads IDQSNKLGKSYNTNNNNSK. A coiled-coil region spans residues 390-423; the sequence is NKASIAELKKMRLEQRKREIEEKRRQVENKKPDS.

This is an uncharacterized protein from Acanthamoeba polyphaga mimivirus (APMV).